An 825-amino-acid polypeptide reads, in one-letter code: Probable ATP-dependent RNA helicase DDX20 (825 aa).

The tract at residues 27–50 (PVQAVEPTPASPWTQRTAHDIGGP) is disordered. A Q motif motif is present at residues 63 to 91 (ADFESLLLSRPVLEGLRAAGFERPSPVQL). ATP contacts are provided by residues Arg-85, Gln-90, 107–114 (AKSGTGKT), and 110–115 (GTGKTC). Positions 94 to 265 (IPLGRCGLDL…TRYMRDPTFV (172 aa)) constitute a Helicase ATP-binding domain. Ser-188 carries the phosphoserine modification. The DEAD box signature appears at 212-215 (DEAD). Phosphoserine is present on Ser-270. One can recognise a Helicase C-terminal domain in the interval 300-449 (HLQELFSKVP…PIPPGLMEEC (150 aa)). 2 stretches are compositionally biased toward polar residues: residues 465-475 (SPTVATQSPKK) and 484-504 (FQSQ…SASA). 2 disordered regions span residues 465–573 (SPTV…PGSL) and 642–753 (QMLV…EPQE). Phosphoserine occurs at positions 472, 501, and 506. Basic residues predominate over residues 508 to 518 (RPKHSKPKLPV). The span at 547-571 (KNSVQTSVEDSSSNSQHQAKDSSPG) shows a compositional bias: polar residues. Thr-552 bears the Phosphothreonine mark. Ser-561, Ser-653, Ser-655, Ser-657, Ser-673, Ser-678, and Ser-679 each carry phosphoserine. Residues 646 to 668 (SSSQSGDSESDSDSCSSRTSSQS) show a composition bias toward low complexity. Thr-689 and Thr-706 each carry phosphothreonine. The segment covering 698-711 (EQVQNGNDTPTQVE) has biased composition (polar residues). Over residues 733–744 (KQSRRNPARRSS) the composition is skewed to basic residues.

It belongs to the DEAD box helicase family. DDX20 subfamily. In terms of assembly, part of the core SMN complex that contains SMN1, GEMIN2/SIP1, DDX20/GEMIN3, GEMIN4, GEMIN5, GEMIN6, GEMIN7, GEMIN8 and STRAP/UNRIP. Part of the SMN-Sm complex that contains SMN1, GEMIN2/SIP1, DDX20/GEMIN3, GEMIN4, GEMIN5, GEMIN6, GEMIN7, GEMIN8, STRAP/UNRIP and the Sm proteins SNRPB, SNRPD1, SNRPD2, SNRPD3, SNRPE, SNRPF and SNRPG. Interacts with SMN1; the interaction is direct. Interacts with GEMIN4; the interaction is direct. Interacts with GEMIN5. Interacts with SNUPN; the interaction is direct. Interacts with PPP4R2. Interacts with FOXL2. Interacts with NANOS1 and PUM2.

Its subcellular location is the cytoplasm. It localises to the nucleus. The protein resides in the gem. The catalysed reaction is ATP + H2O = ADP + phosphate + H(+). It carries out the reaction a ribonucleoside 5'-triphosphate + H2O = a ribonucleoside 5'-diphosphate + phosphate + H(+). Functionally, the SMN complex catalyzes the assembly of small nuclear ribonucleoproteins (snRNPs), the building blocks of the spliceosome, and thereby plays an important role in the splicing of cellular pre-mRNAs. Most spliceosomal snRNPs contain a common set of Sm proteins SNRPB, SNRPD1, SNRPD2, SNRPD3, SNRPE, SNRPF and SNRPG that assemble in a heptameric protein ring on the Sm site of the small nuclear RNA to form the core snRNP (Sm core). In the cytosol, the Sm proteins SNRPD1, SNRPD2, SNRPE, SNRPF and SNRPG are trapped in an inactive 6S pICln-Sm complex by the chaperone CLNS1A that controls the assembly of the core snRNP. To assemble core snRNPs, the SMN complex accepts the trapped 5Sm proteins from CLNS1A forming an intermediate. Binding of snRNA inside 5Sm triggers eviction of the SMN complex, thereby allowing binding of SNRPD3 and SNRPB to complete assembly of the core snRNP. May also play a role in the metabolism of small nucleolar ribonucleoprotein (snoRNPs). The polypeptide is Probable ATP-dependent RNA helicase DDX20 (Ddx20) (Mus musculus (Mouse)).